The sequence spans 310 residues: Nodulation protein D 1 (310 aa).

The HTH lysR-type domain maps to 6–63 (LDLNLLVALDALMTERQLTAAARRINLSQPAMSAAIARLRNYFHDDLFVMQGRELILT). A DNA-binding region (H-T-H motif) is located at residues 23–42 (LTAAARRINLSQPAMSAAIA).

It belongs to the LysR transcriptional regulatory family.

In terms of biological role, nodD regulates the expression of the nodABCFE genes which encode other nodulation proteins. NodD is also a negative regulator of its own expression. Binds flavonoids as inducers. The polypeptide is Nodulation protein D 1 (nodD1) (Neorhizobium galegae (Rhizobium galegae)).